Consider the following 223-residue polypeptide: Transcriptional regulatory protein PhoP (223 aa).

One can recognise a Response regulatory domain in the interval 2–116 (RVLVVEDNAL…EVMARMQALM (115 aa)). At D51 the chain carries 4-aspartylphosphate. A DNA-binding region (ompR/PhoB-type) is located at residues 124–222 (SQVISLPPFQ…VRGQGYLFEL (99 aa)).

As to quaternary structure, monomer in the inactive, unphosphorylated state and dimer in the active, phosphorylated state. Phosphorylated by PhoQ.

The protein resides in the cytoplasm. Feedback inhibited by MgrB, which seems to bind PhoQ, altering its activity and that of downstream effector PhoP. PhoP-regulated transcription is redox-sensitive, being activated when the periplasm becomes more reducing (deletion of dsbA/dsbB, or treatment with dithiothreitol). MgrB acts between DsbA/DsbB and PhoP/PhoQ in this pathway. Functionally, member of the two-component regulatory system PhoP/PhoQ involved in adaptation to low Mg(2+) environments and the control of acid resistance genes. In low periplasmic Mg(2+), PhoQ phosphorylates PhoP, resulting in the expression of PhoP-activated genes (PAG) and repression of PhoP-repressed genes (PRG). In high periplasmic Mg(2+), PhoQ dephosphorylates phospho-PhoP, resulting in the repression of PAG and may lead to expression of some PRG. Mediates magnesium influx to the cytosol by activation of MgtA. Promotes expression of the two-component regulatory system rstA/rstB and transcription of the hemL, mgrB, nagA, slyB, vboR and yrbL genes. The sequence is that of Transcriptional regulatory protein PhoP (phoP) from Escherichia coli (strain K12).